Consider the following 204-residue polypeptide: Probable peptidyl-tRNA hydrolase (204 aa).

Histidine 36 serves as the catalytic Proton acceptor. Positions 86 and 132 each coordinate tRNA.

This sequence belongs to the PTH family.

The enzyme catalyses an N-acyl-L-alpha-aminoacyl-tRNA + H2O = an N-acyl-L-amino acid + a tRNA + H(+). Functionally, peptidyl-tRNA hydrolase that cleaves nascent chains-tRNAs that are not stably fixed in the P-site of 60S ribosome-nascent chain complexes. Acts downstream of the ribosome-associated quality control (RQC) pathway to release non-ubiquitinated nascent chains from 60S and 80S ribosome-nascent chain complexes. Does not act on ubiquitinated nascent chains, which are cleaved by ANKZF1 for degradation. This Mus musculus (Mouse) protein is Probable peptidyl-tRNA hydrolase.